The sequence spans 202 residues: Phosphoenolpyruvate guanylyltransferase (202 aa).

Positions 140, 156, and 159 each coordinate phosphoenolpyruvate.

It belongs to the CofC family.

The catalysed reaction is phosphoenolpyruvate + GTP + H(+) = enolpyruvoyl-2-diphospho-5'-guanosine + diphosphate. It participates in cofactor biosynthesis; coenzyme F420 biosynthesis. Its function is as follows. Guanylyltransferase that catalyzes the activation of phosphoenolpyruvate (PEP) as enolpyruvoyl-2-diphospho-5'-guanosine, via the condensation of PEP with GTP. It is involved in the biosynthesis of coenzyme F420, a hydride carrier cofactor. The polypeptide is Phosphoenolpyruvate guanylyltransferase (Chloroflexus aggregans (strain MD-66 / DSM 9485)).